Consider the following 110-residue polypeptide: Acid stress chaperone HdeA (110 aa).

An N-terminal signal peptide occupies residues 1 to 21 (MKKVLGVILGGLLLLPVVSNA). A disulfide bond links cysteine 39 and cysteine 87.

The protein belongs to the HdeA family.

Its subcellular location is the periplasm. Functionally, required for optimal acid stress protection. Exhibits a chaperone-like activity only at low pH by suppressing non-specifically the aggregation of denaturated periplasmic proteins. The sequence is that of Acid stress chaperone HdeA from Escherichia coli O157:H7.